The primary structure comprises 270 residues: ATP synthase subunit a 1 (270 aa).

A run of 5 helical transmembrane segments spans residues 38–58 (VHID…GIFY), 98–118 (IAPL…MDLV), 143–163 (DVNI…YYSI), 208–228 (LFGN…MLPW), and 239–259 (AIFH…LTIV).

This sequence belongs to the ATPase A chain family. F-type ATPases have 2 components, CF(1) - the catalytic core - and CF(0) - the membrane proton channel. CF(1) has five subunits: alpha(3), beta(3), gamma(1), delta(1), epsilon(1). CF(0) has three main subunits: a(1), b(2) and c(9-12). The alpha and beta chains form an alternating ring which encloses part of the gamma chain. CF(1) is attached to CF(0) by a central stalk formed by the gamma and epsilon chains, while a peripheral stalk is formed by the delta and b chains.

Its subcellular location is the cell inner membrane. Key component of the proton channel; it plays a direct role in the translocation of protons across the membrane. The polypeptide is ATP synthase subunit a 1 (Vibrio campbellii (strain ATCC BAA-1116)).